We begin with the raw amino-acid sequence, 347 residues long: NADH-ubiquinone oxidoreductase chain 2 (347 aa).

The next 10 membrane-spanning stretches (helical) occupy residues 1 to 21 (MNPLTFAMILLTIMLGTTIVM), 25 to 45 (HWLVVWIGFEMNMLAVIPVLM), 59 to 79 (YFLTQATASMLLMLAIVINLI), 96 to 116 (IIMTLALAMKLGLAPFHFWVP), 122 to 142 (IQLSSGLILLTWQKLAPISIL), 150 to 170 (NLNLLLAMSILSVAIGGWGGL), 201 to 221 (ALLNLVIYILLTTTTFSVFML), 242 to 262 (TALLMTMLSLGGLPPLSGFLP), 274 to 294 (NSVIVPTTMAITALLNLYFYM), and 326 to 346 (LSPLIILSTLILPLSPILTLL).

It belongs to the complex I subunit 2 family. In terms of assembly, core subunit of respiratory chain NADH dehydrogenase (Complex I) which is composed of 45 different subunits. Interacts with TMEM242.

It localises to the mitochondrion inner membrane. It catalyses the reaction a ubiquinone + NADH + 5 H(+)(in) = a ubiquinol + NAD(+) + 4 H(+)(out). Its function is as follows. Core subunit of the mitochondrial membrane respiratory chain NADH dehydrogenase (Complex I) which catalyzes electron transfer from NADH through the respiratory chain, using ubiquinone as an electron acceptor. Essential for the catalytic activity and assembly of complex I. The sequence is that of NADH-ubiquinone oxidoreductase chain 2 from Eidolon helvum (Straw-colored fruit bat).